Consider the following 3016-residue polypeptide: Genome polyprotein (3016 aa).

At Ser-2 the chain carries N-acetylserine; by host. The interaction with STAT1 stretch occupies residues 2-23 (STLPKPQRKTKRNTNRRPMDVK). The tract at residues 2–58 (STLPKPQRKTKRNTNRRPMDVKFPGGGQIVGGVYLLPRRGPRLGVRATRKTSERSQP) is interaction with EIF2AK2/PKR. Residues 2 to 59 (STLPKPQRKTKRNTNRRPMDVKFPGGGQIVGGVYLLPRRGPRLGVRATRKTSERSQPR) are interaction with DDX3X. Positions 2–75 (STLPKPQRKT…PKARQSQGRH (74 aa)) are disordered. The Cytoplasmic portion of the chain corresponds to 2–168 (STLPKPQRKT…EDGINYATGN (167 aa)). Short sequence motifs (nuclear localization signal) lie at residues 5–13 (PKPQRKTKR) and 38–43 (PRRGPR). Over residues 7–16 (PQRKTKRNTN) the composition is skewed to basic residues. Low complexity predominate over residues 32–47 (GGVYLLPRRGPRLGVR). Ser-53 is modified (phosphoserine; by host). 2 short sequence motifs (nuclear localization signal) span residues 58–64 (PRGRRQP) and 66–71 (PKARQS). Residues Ser-99 and Ser-116 each carry the phosphoserine; by host modification. Residues 112–152 (PRRRSRNLGKVIDTLTCGFADLMGYIPVVGAPLGGVAAALA) are important for endoplasmic reticulum and mitochondrial localization. Residues 122–173 (VIDTLTCGFADLMGYIPVVGAPLGGVAAALAHGVRAIEDGINYATGNLPGCS) are interaction with APOA2. Positions 164–167 (YATG) are important for lipid droplets localization. A helical membrane pass occupies residues 169–189 (LPGCSFSIFLLALLSCLTTPA). A propeptide spans 178 to 191 (LLALLSCLTTPASA) (ER anchor for the core protein, removed in mature form by host signal peptidase). Residues 190-358 (SAVHYRNISG…LEGHWGVIGA (169 aa)) are Lumenal-facing. Residues Asn-196, Asn-209, Asn-234, and Asn-250 are each glycosylated (N-linked (GlcNAc...) asparagine; by host). Positions 265–296 (LVGSAAACSALYIGDLCGGVFLVGQLFTFRPR) are important for fusion. Asn-305 carries an N-linked (GlcNAc...) asparagine; by host glycan. A helical transmembrane segment spans residues 359 to 379 (LLYYSMVANWAKVFAVLLLFA). Residues 380–727 (GVDATTHIGS…WEYIVLAFLV (348 aa)) lie on the Lumenal side of the membrane. The HVR1 stretch occupies residues 385–411 (THIGSSASATTNRLTSFFSPGSKQNVQ). N-linked (GlcNAc...) (high mannose) asparagine; by host glycans are attached at residues Asn-416, Asn-422, and Asn-429. Intrachain disulfides connect Cys-428–Cys-552, Cys-451–Cys-458, Cys-486–Cys-494, and Cys-503–Cys-508. Asn-447 is a glycosylation site (N-linked (GlcNAc...) asparagine; by host). The interval 474 to 478 (ANISG) is HVR2. N-linked (GlcNAc...) asparagine; by host glycosylation occurs at Asn-475. Residues 480–493 (SNDKPYCWHYPPRP) are CD81-binding 1. Asn-532 carries an N-linked (GlcNAc...) asparagine; by host glycan. The segment at 544 to 551 (PPRGSWFG) is CD81-binding 2. N-linked (GlcNAc...) asparagine; by host glycosylation is present at Asn-556. Cystine bridges form between Cys-564/Cys-569, Cys-583/Cys-587, Cys-599/Cys-622, and Cys-609/Cys-646. 2 N-linked (GlcNAc...) (high mannose) asparagine; by host glycosylation sites follow: Asn-625 and Asn-647. Cys-654 and Cys-679 form a disulfide bridge. A PKR/eIF2-alpha phosphorylation homology domain (PePHD) region spans residues 662–673 (VEMSPLLFSTTQ). The helical transmembrane segment at 728–748 (LAVARVCACLWLMFLVGQAEA) threads the bilayer. Topologically, residues 749 to 759 (ALENLIVLNAT) are lumenal. The chain crosses the membrane as a helical span at residues 760 to 780 (SAAGSQGWVWGVVFICAAWYI). Residues 781-784 (RGRA) are Cytoplasmic-facing. The chain crosses the membrane as a helical span at residues 785–805 (APITTYAILQLWPLLLLVLAL). At 806 to 815 (PRRAYAYNGE) the chain is on the lumenal side. Residues 816 to 836 (EAASLGMLAIVIITIFTLTPA) form a helical membrane-spanning segment. Topologically, residues 837–883 (YKTLLISTLWWIQYYIARAEAMLYVWVPSLQVRGGRDAVILLTCLLH) are cytoplasmic. Residues 884 to 904 (PQLGFEVTKAILALLGPLYIL) traverse the membrane as a helical segment. At 905-930 (QYSLLKTPYFVRAHILLRVCMFLRGV) the chain is on the lumenal side. The Peptidase C18 domain maps to 905–1028 (QYSLLKTPYF…DIRDGGWRLL (124 aa)). Positions 906-1208 (YSLLKTPYFV…PVENMQSTAR (303 aa)) are protease NS2-3. Cys-924 is lipidated: S-palmitoyl cysteine; by host. A helical transmembrane segment spans residues 931-951 (AGGKYVQAALLRLGAWTGTYI). Residues 931–951 (AGGKYVQAALLRLGAWTGTYI) are interaction with host SCPS1. Residues 952-1659 (YDHLTPLSDW…CMSADLEVIT (708 aa)) lie on the Cytoplasmic side of the membrane. Catalysis depends on for protease NS2 activity; shared with dimeric partner residues His-954, Glu-974, and Cys-995. The Peptidase S29 domain maps to 1029–1210 (APITAYAQQT…ENMQSTARSP (182 aa)). Residues His-1085 and Asp-1109 each act as charge relay system; for serine protease NS3 activity in the active site. Residues Cys-1125 and Cys-1127 each contribute to the Zn(2+) site. Ser-1167 acts as the Charge relay system; for serine protease NS3 activity in catalysis. Residues Cys-1173 and His-1177 each coordinate Zn(2+). The Helicase ATP-binding domain maps to 1219 to 1371 (PAVPQTYQVG…PNITEVALSS (153 aa)). 1232-1239 (APTGSGKS) lines the ATP pocket. Mg(2+)-binding residues include Ser-1239 and Glu-1319. The DECH box signature appears at 1318–1321 (DECH). The tract at residues 1488–1500 (QRRGRTGRGKHGV) is RNA-binding. Residues 1660 to 1680 (STWVLVGGVLAALAAYCLSVG) traverse the membrane as a helical segment. The tract at residues 1681–1692 (CVVVCGRISTTG) is NS3-binding. Residues 1681–1807 (CVVVCGRIST…SLTSPLSTST (127 aa)) are Cytoplasmic-facing. A helical membrane pass occupies residues 1808 to 1828 (TLLLNILGGWVASQLANPTAS). The Lumenal portion of the chain corresponds to 1829–1830 (TA). Residues 1831-1851 (FVVSGLAGATVGSIGLGRVLV) form a helical membrane-spanning segment. A topological domain (cytoplasmic) is located at residue Asp-1852. Residues 1853–1873 (IIAGYGAGVSGALVAFKIMSG) traverse the membrane as a helical segment. The Lumenal segment spans residues 1874 to 1883 (ETPSAEDMVN). The helical transmembrane segment at 1884 to 1904 (LLPALLSPGALVVGVVCAAIL) threads the bilayer. The Cytoplasmic segment spans residues 1905 to 1974 (RRHAGPAEGA…WINSDWSTPC (70 aa)). The S-palmitoyl cysteine; by host moiety is linked to residue Cys-1974. The stretch at 1975–2004 (SGSWLRDIWDWVCTVLSDFKVWLKSKLVPA) is an intramembrane region. The Cytoplasmic portion of the chain corresponds to 2005-2995 (LPGVPFLSCQ…YHSVSRARPR (991 aa)). Zn(2+)-binding residues include Cys-2013, Cys-2031, Cys-2033, and Cys-2054. Residues 2122 to 2210 (EFFTEVDGVR…ASSLASQLSA (89 aa)) form an FKBP8-binding region. The interval 2122 to 2335 (EFFTEVDGVR…PVPPPRRKSV (214 aa)) is transcriptional activation. Residues 2137 to 2141 (PACKP) form an interaction with non-structural protein 4A region. Residues 2191–2443 (RLARGSPPSC…ALVTPCAAEE (253 aa)) form an interaction with host SKP2 region. Phosphoserine; by host is present on residues Ser-2196, Ser-2199, Ser-2203, Ser-2206, Ser-2209, and Ser-2212. Positions 2212–2251 (SLKATCTTHCAHPDADLIEANLLWRQEVGGNITRVESENK) are ISDR. The interval 2212–2277 (SLKATCTTHC…REPSVPAECH (66 aa)) is interaction with EIF2AK2/PKR. The tract at residues 2251 to 2309 (KVIVLDSFDPLVPEYDDREPSVPAECHRPNRPKFPPALPIWARPDYNPPLLETWKKPDY) is NS4B-binding. The segment at 2302–2379 (ETWKKPDYAP…PTTSKSSDQA (78 aa)) is V3. Residues 2325–2328 (PPVP) carry the SH3-binding motif. Residues 2330 to 2338 (PRRKSVVHL) carry the Nuclear localization signal motif. Residue Lys-2353 forms a Glycyl lysine isopeptide (Lys-Gly) (interchain with G-Cter in ubiquitin) linkage. Residues 2353–2414 (KSFPTQPAST…PDLSSGSWST (62 aa)) are disordered. A compositionally biased stretch (polar residues) spans 2355–2376 (FPTQPASTPDSDSGHPTTSKSS). Ser-2454 carries the post-translational modification Phosphoserine; by host. Positions 2639–2757 (PMGFSYDTRC…IAESAGVQED (119 aa)) constitute a RdRp catalytic domain. Mg(2+)-binding residues include Asp-2645, Asp-2743, and Asp-2744. Residues 2996–3016 (IFLLCLLLLSVGVGIFLLPAR) form a helical membrane-spanning segment.

The protein belongs to the hepacivirus polyprotein family. In terms of assembly, homooligomer. Interacts with E1 (via C-terminus). Interacts with the non-structural protein 5A. Interacts (via N-terminus) with host STAT1 (via SH2 domain); this interaction results in decreased STAT1 phosphorylation and ubiquitin-mediated proteasome-dependent STAT1 degradation, leading to decreased IFN-stimulated gene transcription. Interacts with host STAT3; this interaction constitutively activates STAT3. Interacts with host LTBR receptor. Interacts with host TNFRSF1A receptor and possibly induces apoptosis. Interacts with host HNRPK. Interacts with host YWHAE. Interacts with host UBE3A/E6AP. Interacts with host DDX3X. Interacts with host APOA2. Interacts with host RXRA protein. Interacts with host SP110 isoform 3/Sp110b; this interaction sequesters the transcriptional corepressor SP110 away from the nucleus. Interacts with host CREB3 nuclear transcription protein; this interaction triggers cell transformation. Interacts with host ACY3. Interacts with host C1QR1. Interacts with host RBM24; this interaction, which enhances the interaction of the mature core protein with 5'-UTR, may inhibit viral translation and favor replication. Interacts with host EIF2AK2/PKR; this interaction induces the autophosphorylation of EIF2AK2. Part of the viral assembly initiation complex composed of NS2, E1, E2, NS3, NS4A, NS5A and the mature core protein. As to quaternary structure, forms a heterodimer with envelope glycoprotein E2. Interacts with mature core protein. Interacts with protease NS2. The heterodimer E1/E2 interacts with host CLDN1; this interaction plays a role in viral entry into host cell. Interacts with host SPSB2 (via C-terminus). Part of the viral assembly initiation complex composed of NS2, E1, E2, NS3, NS4A, NS5A and the mature core protein. Interacts with host NEURL3; this interaction prevents E1 binding to glycoprotein E2. Forms a heterodimer with envelope glycoprotein E1. Interacts with host CD81 and SCARB1 receptors; these interactions play a role in viral entry into host cell. Interacts with host EIF2AK2/PKR; this interaction inhibits EIF2AK2 and probably allows the virus to evade the innate immune response. Interacts with host CD209/DC-SIGN and CLEC4M/DC-SIGNR. Interact with host SPCS1; this interaction is essential for viral particle assembly. Interacts with protease NS2. The heterodimer E1/E2 interacts with host CLDN1; this interaction plays a role in viral entry into host cell. Part of the viral assembly initiation complex composed of NS2, E1, E2, NS3, NS4A, NS5A and the mature core protein. Interacts with host SLC3A2/4F2hc; the interaction may facilitate viral entry into host cell. Interacts with human PLSCR1. In terms of assembly, homohexamer. Homoheptamer. Interacts with protease NS2. As to quaternary structure, homodimer. Interacts with host SPCS1; this interaction is essential for viral particle assembly. Interacts with envelope glycoprotein E1. Interacts with envelope glycoprotein E2. Interacts with viroporin p7. Interacts with serine protease/helicase NS3. Part of the replication complex composed of NS2, NS3, NS4A, NS4B, NS5A and the RNA-directed RNA polymerase embedded in an ER-derived membranous web. Part of the viral assembly initiation complex composed of NS2, E1, E2, NS3, NS4A, NS5A and the mature core protein. Interacts with protease NS2. Interacts with non-structural protein 4A; this interaction stabilizes the folding of NS3 serine protease. NS3-NS4A interaction is essential for NS3 activation and allows membrane anchorage of the latter. NS3/NS4A complex also prevents phosphorylation of host IRF3, thus preventing the establishment of dsRNA induced antiviral state. Interacts with host MAVS; this interaction leads to the cleavage and inhibition of host MAVS. Interacts with host TICAM1; this interaction leads to the cleavage and inhibition of host TICAM1. Interacts with host TANK-binding kinase/TBK1; this interaction results in the inhibition of the association between TBK1 and IRF3, which leads to the inhibition of IRF3 activation. Interacts with host RBM24. Part of the replication complex composed of NS2, NS3, NS4A, NS4B, NS5A and the RNA-directed RNA polymerase embedded in an ER-derived membranous web. Part of the viral assembly initiation complex composed of NS2, E1, E2, NS3, NS4A, NS5A and the mature core protein. In terms of assembly, interacts with NS3 serine protease; this interaction stabilizes the folding of NS3 serine protease. NS3-NS4A interaction is essential for NS3 activation and allows membrane anchorage of the latter. Interacts with non-structural protein 5A (via N-terminus). Part of the replication complex composed of NS2, NS3, NS4A, NS4B, NS5A and the RNA-directed RNA polymerase embedded in an ER-derived membranous web. Part of the viral assembly initiation complex composed of NS2, E1, E2, NS3, NS4A, NS5A and the mature core protein. As to quaternary structure, homomultimer. Interacts with non-structural protein NS5A. Interacts with host PLA2G4C; this interaction likely initiates the recruitment of replication complexes to lipid droplets. Interacts with host STING; this interaction disrupts the interaction between STING and TBK1 thereby suppressing the interferon signaling. Part of the replication complex composed of NS2, NS3, NS4A, NS4B, NS5A and the RNA-directed RNA polymerase embedded in an ER-derived membranous web. Monomer. Homodimer; dimerization is required for RNA-binding. Interacts with the mature core protein. Interacts (via N-terminus) with non-structural protein 4A. Interacts with non-structural protein 4B. Interacts (via region D2) with RNA-directed RNA polymerase. Part of the viral assembly initiation complex composed of NS2, E1, E2, NS3, NS4A, NS5A and the mature core protein. Part of the replication complex composed of NS2, NS3, NS4A, NS4B, NS5A and the RNA-directed RNA polymerase embedded in an ER-derived membranous web. Interacts with host GRB2. Interacts with host BIN1. Interacts with host PIK3R1. Interacts with host SRCAP. Interacts with host FKBP8. Interacts (via C-terminus) with host VAPB (via MSP domain). Interacts with host EIF2AK2/PKR; this interaction leads to disruption of EIF2AK2 dimerization by NS5A and probably allows the virus to evade the innate immune response. Interacts (via N-terminus) with host PACSIN2 (via N-terminus); this interaction attenuates protein kinase C alpha-mediated phosphorylation of PACSIN2 by disrupting the interaction between PACSIN2 and PRKCA. Interacts (via N-terminus) with host SRC kinase (via SH2 domain). Interacts with most Src-family kinases. Interacts with host IFI27 and SKP2; promotes the ubiquitin-mediated proteasomal degradation of NS5A. Interacts with host GPS2. Interacts with host TNFRSF21; this interaction allows the modulation by the virus of JNK, p38 MAPK, STAT3, and Akt signaling pathways in a DR6-dependent manner. Interacts (via N-terminus) with host CIDEB (via N-terminus); this interaction seems to regulate the association of HCV particles with APOE. Interacts with host CHKA/Choline Kinase-alpha; CHKA bridges host PI4KA and NS5A and potentiates NS5A-stimulated PI4KA activity, which then facilitates the targeting of the ternary complex to the ER for viral replication. Interacts with host SPSB2 (via C-terminus); this interaction targets NS5A for ubiquitination and degradation. Interacts with host RAB18; this interaction may promote the association of NS5A and other replicase components with lipid droplets. Interacts (via region D2) with host PPIA/CYPA; the interaction stimulates RNA-binding ability of NS5A and is dependent on the peptidyl-prolyl cis-trans isomerase activity of PPIA/CYPA. Interacts with host TRIM14; this interaction induces the degradation of NS5A. In terms of assembly, homooligomer. Interacts with non-structural protein 5A. Interacts with host VAPB. Interacts with host PRK2/PKN2. Interacts with host HNRNPA1 and SEPT6; these interactions facilitate viral replication. Part of the replication complex composed of NS2, NS3, NS4A, NS4B, NS5A and the RNA-directed RNA polymerase. The cofactor is Zn(2+). Mg(2+) is required as a cofactor. In terms of processing, specific enzymatic cleavages in vivo yield mature proteins. The structural proteins, core, E1, E2 and p7 are produced by proteolytic processing by host signal peptidases. The core protein precursor is synthesized as a 23 kDa, which is retained in the ER membrane through the hydrophobic signal peptide. Cleavage by the signal peptidase releases the 21 kDa mature core protein. The cleavage of the core protein precursor occurs between aminoacids 176 and 188 but the exact cleavage site is not known. Some degraded forms of the core protein appear as well during the course of infection. The other proteins (p7, NS2, NS3, NS4A, NS4B, NS5A and NS5B) are cleaved by the viral proteases. Autoprocessing between NS2 and NS3 is mediated by the NS2 cysteine protease catalytic domain and regulated by the NS3 N-terminal domain. Post-translationally, phosphorylated by host PKC and PKA. Ubiquitinated; mediated by UBE3A and leading to core protein subsequent proteasomal degradation. In terms of processing, highly N-glycosylated. Post-translationally, palmitoylation is required for NS2/3 autoprocessing and E2 recruitment to membranes. Palmitoylated. This modification may play a role in its polymerization or in protein-protein interactions. In terms of processing, phosphorylated on serines in a basal form termed p56. p58 is a hyperphosphorylated form of p56. p56 and p58 coexist in the cell in roughly equivalent amounts. Hyperphosphorylation is dependent on the presence of NS4A. Host CSNK1A1/CKI-alpha or RPS6KB1 kinases may be responsible for NS5A phosphorylation. Post-translationally, tyrosine phosphorylation is essential for the interaction with host SRC. Ubiquitinated. Ubiquitination, most probably at Lys-2353, mediated by host IFI27 and SKP2 leads to proteasomal degradation, restricting viral infection. Ubiquitination by host TRIM22 leads to interruption of viral replication. In terms of processing, the N-terminus is phosphorylated by host PRK2/PKN2.

The protein localises to the host endoplasmic reticulum membrane. It localises to the host mitochondrion membrane. It is found in the virion. Its subcellular location is the host cytoplasm. The protein resides in the host nucleus. The protein localises to the host lipid droplet. It localises to the virion membrane. It is found in the host mitochondrion. Its subcellular location is the host cell membrane. The protein resides in the host perinuclear region. It carries out the reaction Hydrolysis of four peptide bonds in the viral precursor polyprotein, commonly with Asp or Glu in the P6 position, Cys or Thr in P1 and Ser or Ala in P1'.. It catalyses the reaction a ribonucleoside 5'-triphosphate + H2O = a ribonucleoside 5'-diphosphate + phosphate + H(+). The enzyme catalyses ATP + H2O = ADP + phosphate + H(+). The catalysed reaction is RNA(n) + a ribonucleoside 5'-triphosphate = RNA(n+1) + diphosphate. Its activity is regulated as follows. Inhibited by the antiviral drug hexamethylene amiloride. Inhibition by amantadine appears to be genotype-dependent. Also inhibited by long-alkyl-chain iminosugar derivatives. Activity is up-regulated by PRK2/PKN2-mediated phosphorylation. Its function is as follows. Packages viral RNA to form a viral nucleocapsid, and promotes virion budding. Participates in the viral particle production as a result of its interaction with the non-structural protein 5A. Binds RNA and may function as a RNA chaperone to induce the RNA structural rearrangements taking place during virus replication. Modulates viral translation initiation by interacting with viral IRES and 40S ribosomal subunit. Affects various cell signaling pathways, host immunity and lipid metabolism. Prevents the establishment of cellular antiviral state by blocking the interferon-alpha/beta (IFN-alpha/beta) and IFN-gamma signaling pathways and by blocking the formation of phosphorylated STAT1 and promoting ubiquitin-mediated proteasome-dependent degradation of STAT1. Activates STAT3 leading to cellular transformation. Regulates the activity of cellular genes, including c-myc and c-fos. May repress the promoter of p53, and sequester CREB3 and SP110 isoform 3/Sp110b in the cytoplasm. Represses cell cycle negative regulating factor CDKN1A, thereby interrupting an important check point of normal cell cycle regulation. Targets transcription factors involved in the regulation of inflammatory responses and in the immune response: suppresses TNF-induced NF-kappa-B activation, and activates AP-1. Binds to dendritic cells (DCs) via C1QR1, resulting in down-regulation of T-lymphocytes proliferation. Alters lipid metabolism by interacting with hepatocellular proteins involved in lipid accumulation and storage. Induces up-regulation of FAS promoter activity, and thereby contributes to the increased triglyceride accumulation in hepatocytes (steatosis). Forms a heterodimer with envelope glycoprotein E2, which mediates virus attachment to the host cell, virion internalization through clathrin-dependent endocytosis and fusion with host membrane. Fusion with the host cell is most likely mediated by both E1 and E2, through conformational rearrangements of the heterodimer required for fusion rather than a classical class II fusion mechanism. E1/E2 heterodimer binds host apolipoproteins such as APOB and ApoE thereby forming a lipo-viro-particle (LVP). APOE associated to the LVP allows the initial virus attachment to cell surface receptors such as the heparan sulfate proteoglycans (HSPGs), syndecan-1 (SDC1), syndecan-1 (SDC2), the low-density lipoprotein receptor (LDLR) and scavenger receptor class B type I (SCARB1). The cholesterol transfer activity of SCARB1 allows E2 exposure and binding of E2 to SCARB1 and the tetraspanin CD81. E1/E2 heterodimer binding on CD81 activates the epithelial growth factor receptor (EGFR) signaling pathway. Diffusion of the complex E1-E2-EGFR-SCARB1-CD81 to the cell lateral membrane allows further interaction with Claudin 1 (CLDN1) and occludin (OCLN) to finally trigger HCV entry. Functionally, forms a heterodimer with envelope glycoprotein E1, which mediates virus attachment to the host cell, virion internalization through clathrin-dependent endocytosis and fusion with host membrane. Fusion with the host cell is most likely mediated by both E1 and E2, through conformational rearrangements of the heterodimer required for fusion rather than a classical class II fusion mechanism. The interaction between envelope glycoprotein E2 and host apolipoprotein E/APOE allows the proper assembly, maturation and infectivity of the viral particles. This interaction is probably promoted via the up-regulation of cellular autophagy by the virus. E1/E2 heterodimer binds host apolipoproteins such as APOB and APOE thereby forming a lipo-viro-particle (LVP). APOE associated to the LVP allows the initial virus attachment to cell surface receptors such as the heparan sulfate proteoglycans (HSPGs), syndecan-1 (SDC1), syndecan-1 (SDC2), the low-density lipoprotein receptor (LDLR) and scavenger receptor class B type I (SCARB1). The cholesterol transfer activity of SCARB1 allows E2 exposure and binding of E2 to SCARB1 and the tetraspanin CD81. E1/E2 heterodimer binding on CD81 activates the epithelial growth factor receptor (EGFR) signaling pathway. Diffusion of the complex E1-E2-EGFR-SCARB1-CD81 to the cell lateral membrane allows further interaction with Claudin 1 (CLDN1) and occludin (OCLN) to finally trigger HCV entry. Inhibits host EIF2AK2/PKR activation, preventing the establishment of an antiviral state. Viral ligand for CD209/DC-SIGN and CLEC4M/DC-SIGNR, which are respectively found on dendritic cells (DCs), and on liver sinusoidal endothelial cells and macrophage-like cells of lymph node sinuses. These interactions allow the capture of circulating HCV particles by these cells and subsequent facilitated transmission to permissive cells such as hepatocytes and lymphocyte subpopulations. The interaction between E2 and host amino acid transporter complex formed by SLC3A2 and SLC7A5/LAT1 may facilitate viral entry into host cell. In terms of biological role, ion channel protein that acts as a viroporin and plays an essential role in the assembly, envelopment and secretion of viral particles. Regulates the host cell secretory pathway, which induces the intracellular retention of viral glycoproteins and favors assembly of viral particles. Creates a pore in acidic organelles and releases Ca(2+) and H(+) in the cytoplasm of infected cells, leading to a productive viral infection. High levels of cytoplasmic Ca(2+) may trigger membrane trafficking and transport of viral ER-associated proteins to viroplasms, sites of viral genome replication. This ionic imbalance induces the assembly of the inflammasome complex, which triggers the maturation of pro-IL-1beta into IL-1beta through the action of caspase-1. Targets also host mitochondria and induces mitochondrial depolarization. In addition of its role as a viroporin, acts as a lipid raft adhesion factor. Its function is as follows. Cysteine protease required for the proteolytic auto-cleavage between the non-structural proteins NS2 and NS3. The N-terminus of NS3 is required for the function of NS2 protease (active region NS2-3). Promotes the initiation of viral particle assembly by mediating the interaction between structural and non-structural proteins. Displays three enzymatic activities: serine protease with a chymotrypsin-like fold, NTPase and RNA helicase. NS3 serine protease, in association with NS4A, is responsible for the cleavages of NS3-NS4A, NS4A-NS4B, NS4B-NS5A and NS5A-NS5B. The NS3/NS4A complex prevents phosphorylation of host IRF3, thus preventing the establishment of dsRNA induced antiviral state. The NS3/NS4A complex induces host amino acid transporter component SLC3A2, thus contributing to HCV propagation. NS3 RNA helicase binds to RNA and unwinds both dsDNA and dsRNA in the 3' to 5' direction, and likely resolves RNA complicated stable secondary structures in the template strand. Binds a single ATP and catalyzes the unzipping of a single base pair of dsRNA. Inhibits host antiviral proteins TBK1 and IRF3 thereby preventing the establishment of an antiviral state. Cleaves host MAVS/CARDIF thereby preventing the establishment of an antiviral state. Cleaves host TICAM1/TRIF, thereby disrupting TLR3 signaling and preventing the establishment of an antiviral state. Functionally, peptide cofactor which forms a non-covalent complex with the N-terminal of NS3 serine protease. The NS3/NS4A complex prevents phosphorylation of host IRF3, thus preventing the establishment of dsRNA induced antiviral state. The NS3/NS4A complex induces host amino acid transporter component SLC3A2, thus contributing to HCV propagation. In terms of biological role, induces a specific membrane alteration that serves as a scaffold for the virus replication complex. This membrane alteration gives rise to the so-called ER-derived membranous web that contains the replication complex. NS4B self-interaction contributes to its function in membranous web formation. Promotes host TRIF protein degradation in a CASP8-dependent manner thereby inhibiting host TLR3-mediated interferon signaling. Disrupts the interaction between STING and TBK1 contributing to the inhibition of interferon signaling. Its function is as follows. Phosphorylated protein that is indispensable for viral replication and assembly. Both hypo- and hyperphosphorylated states are required for the viral life cycle. The hyperphosphorylated form of NS5A is an inhibitor of viral replication. Involved in RNA-binding and especially in binding to the viral genome. Zinc is essential for RNA-binding. Participates in the viral particle production as a result of its interaction with the mature viral core protein. Its interaction with host VAPB may target the viral replication complex to vesicles. Down-regulates viral IRES translation initiation. Mediates interferon resistance, presumably by interacting with and inhibiting host EIF2AK2/PKR. Prevents BIN1-induced apoptosis. Acts as a transcriptional activator of some host genes important for viral replication when localized in the nucleus. Via the interaction with host PACSIN2, modulates lipid droplet formation in order to promote virion assembly. Modulates TNFRSF21/DR6 signaling pathway for viral propagation. RNA-dependent RNA polymerase that performs primer-template recognition and RNA synthesis during viral replication. Initiates RNA transcription/replication at a flavin adenine dinucleotide (FAD), resulting in a 5'- FAD cap on viral RNAs. In this way, recognition of viral 5' RNA by host pattern recognition receptors can be bypassed, thereby evading activation of antiviral pathways. This chain is Genome polyprotein, found in Hepatitis C virus genotype 6k (isolate VN405) (HCV).